Here is a 113-residue protein sequence, read N- to C-terminus: 4-cresol dehydrogenase [hydroxylating] cytochrome c subunit (113 aa).

The first 33 residues, 1–33, serve as a signal peptide directing secretion; the sequence is MTFPFSGAAVKRMLVTGVVLPFGLLVAAGQAQA. C48, C51, H52, and M83 together coordinate heme c.

Tetramer of two cytochrome subunits and two flavoprotein subunits. Binds 1 heme c group covalently per subunit.

It participates in aromatic compound metabolism; p-cresol degradation. In terms of biological role, this is the heme-containing component of the p-cresol methylhydroxylase. It accepts electrons from the flavoprotein subunit. The sequence is that of 4-cresol dehydrogenase [hydroxylating] cytochrome c subunit (pchC) from Pseudomonas putida (Arthrobacter siderocapsulatus).